A 206-amino-acid polypeptide reads, in one-letter code: Small ribosomal subunit protein uS4 (206 aa).

One can recognise an S4 RNA-binding domain in the interval 96–156 (CRLDNVVYRM…EKSSNQLRIV (61 aa)).

Belongs to the universal ribosomal protein uS4 family. Part of the 30S ribosomal subunit. Contacts protein S5. The interaction surface between S4 and S5 is involved in control of translational fidelity.

Its function is as follows. One of the primary rRNA binding proteins, it binds directly to 16S rRNA where it nucleates assembly of the body of the 30S subunit. In terms of biological role, with S5 and S12 plays an important role in translational accuracy. The chain is Small ribosomal subunit protein uS4 from Pseudomonas putida (strain W619).